A 518-amino-acid polypeptide reads, in one-letter code: Lycopene epsilon cyclase, chloroplastic (518 aa).

100-128 contributes to the NAD(+) binding site; it reads LIVIGCGPAGMSLAAEAGKRGLSVGLIGP. Helical transmembrane passes span 435-455 and 469-489; these read FFLF…RIFF and FLGS…MFAI.

It belongs to the lycopene cyclase family. In terms of tissue distribution, expressed in leaves and roots. Detected in flower buds and lips.

It localises to the plastid. Its subcellular location is the chloroplast membrane. The catalysed reaction is a carotenoid psi-end group = a carotenoid epsilon-end group. Its pathway is carotenoid biosynthesis; alpha-zeacarotene biosynthesis. The protein operates within carotenoid biosynthesis; delta-carotene biosynthesis. Catalyzes the single epsilon-cyclization reaction which converts lycopene to delta-carotene and neurosporene to alpha-zeacarotene. Required for lutein biosynthesis. This chain is Lycopene epsilon cyclase, chloroplastic, found in Oncidium hybrid cultivar (Orchid).